The primary structure comprises 210 residues: CLAVATA3/ESR (CLE)-related protein 4A-3 (210 aa).

Positions 1 to 21 are cleaved as a signal peptide; that stretch reads MAKNAMLCLLILRVVLALAFA. The tract at residues 21–83 is required for secretion from the host cytoplasm to the host apoplasm; sequence ATNKKGDEEP…SNQLPNNNWM (63 aa). The N-linked (GlcNAc...) asparagine glycan is linked to Asn32. The disordered stretch occupies residues 116 to 210; the sequence is RKTGMHSQRH…APAGPDPIHH (95 aa). Composition is skewed to basic and acidic residues over residues 125–137 and 144–200; these read HHEETTLEQEKRV and PIHH…EKRG. An A-1 repeat occupies 127 to 135; the sequence is EETTLEQEK. The segment at 127–198 is 4 X approximate repeat A; the sequence is EETTLEQEKR…HEDTTLEQEK (72 aa). A CLE-1 repeat occupies 136–147; it reads RVAGAGPDPIHH. The 4 X approximate repeat CLE stretch occupies residues 136–210; that stretch reads RVAGAGPDPI…APAGPDPIHH (75 aa). One copy of the A-2 repeat lies at 148–156; that stretch reads QDTTLEQEK. The stretch at 157–168 is one CLE-2 repeat; sequence RAVPAGPDPKHH. The A-3 repeat unit spans residues 169 to 177; that stretch reads EETTLEQEK. One copy of the CLE-3 repeat lies at 178-189; that stretch reads RAVPAGPDPKHH. The stretch at 190–198 is one A-4 repeat; that stretch reads EDTTLEQEK. A CLE-4 repeat occupies 199–210; that stretch reads RGAPAGPDPIHH.

It belongs to the CLV3/ESR signal peptide family. Highly expressed exclusively within the dorsal esophageal gland cell during syncytium formation in host plants.

It localises to the secreted. It is found in the host cytoplasm. The protein resides in the host extracellular space. Its subcellular location is the extracellular space. The protein localises to the apoplast. In terms of biological role, mimics host plant CLE extracellular signal peptides that regulate cell fate. May play a role in the differentiation or division of feeding cells (syncytia) induced in plant roots during infection. The chain is CLAVATA3/ESR (CLE)-related protein 4A-3 (CLE-4A-3) from Globodera rostochiensis (Golden nematode worm).